A 145-amino-acid polypeptide reads, in one-letter code: Leghemoglobin-1 (145 aa).

The Globin domain occupies 3-145 (AFSDKQEALV…ELAAAIKKAY (143 aa)). 2 positions are modified to nitrated tyrosine: Y26 and Y31. S46 provides a ligand contact to heme b. S46 is subject to Phosphoserine. H62 lines the O2 pocket. 3 residues coordinate heme b: K65, H93, and K96. Nitrated tyrosine is present on Y134.

Belongs to the plant globin family. Monomer. Nitrated in effective nodules and particularly in hypoxic conditions; this mechanism may play a protective role in the symbiosis by buffering toxic peroxynitrite NO(2)(-). Nitration level decrease during nodule senescence. In terms of processing, phosphorylation at Ser-46 disrupts the molecular environment of its porphyrin ring oxygen binding pocket, thus leading to a reduced oxygen consumption and to the delivery of oxygen O(2) to symbiosomes. As to expression, root nodules.

The protein resides in the cytoplasm. Its subcellular location is the cytosol. It is found in the nucleus. Functionally, leghemoglobin that reversibly binds oxygen O(2) through a pentacoordinated heme iron. In root nodules, facilitates the diffusion of oxygen to the bacteroids while preventing the bacterial nitrogenase from being inactivated by buffering dioxygen, nitric oxide and carbon monoxide, and promoting the formation of reactive oxygen species (ROS, e.g. H(2)O(2)). This role is essential for symbiotic nitrogen fixation (SNF). The chain is Leghemoglobin-1 from Vigna unguiculata (Cowpea).